A 508-amino-acid polypeptide reads, in one-letter code: Photosystem II CP47 reaction center protein (508 aa).

6 consecutive transmembrane segments (helical) span residues 21-36 (SVHIMHTALVAGWAGS), 101-115 (IVFSGLCFLAAIWHW), 140-156 (GIHLFLSGVACFGFGAF), 203-218 (IAAGTLGILAGLFHLS), 237-252 (VLSSSIAAVFFAAFVV), and 457-472 (SFALLFFFGHIWHGSR).

This sequence belongs to the PsbB/PsbC family. PsbB subfamily. As to quaternary structure, PSII is composed of 1 copy each of membrane proteins PsbA, PsbB, PsbC, PsbD, PsbE, PsbF, PsbH, PsbI, PsbJ, PsbK, PsbL, PsbM, PsbT, PsbX, PsbY, PsbZ, Psb30/Ycf12, at least 3 peripheral proteins of the oxygen-evolving complex and a large number of cofactors. It forms dimeric complexes. The cofactor is Binds multiple chlorophylls. PSII binds additional chlorophylls, carotenoids and specific lipids..

It is found in the plastid. The protein localises to the chloroplast thylakoid membrane. In terms of biological role, one of the components of the core complex of photosystem II (PSII). It binds chlorophyll and helps catalyze the primary light-induced photochemical processes of PSII. PSII is a light-driven water:plastoquinone oxidoreductase, using light energy to abstract electrons from H(2)O, generating O(2) and a proton gradient subsequently used for ATP formation. The protein is Photosystem II CP47 reaction center protein of Fagopyrum esculentum subsp. ancestrale (Wild buckwheat).